An 84-amino-acid polypeptide reads, in one-letter code: Putative antitoxin RelB4 (84 aa).

Functionally, antitoxin component of a type II toxin-antitoxin (TA) system. Its cognate toxin is RelE4 (Potential). The protein is Putative antitoxin RelB4 (relB4) of Methanocaldococcus jannaschii (strain ATCC 43067 / DSM 2661 / JAL-1 / JCM 10045 / NBRC 100440) (Methanococcus jannaschii).